Here is a 585-residue protein sequence, read N- to C-terminus: DNA mismatch repair protein MutL (585 aa).

Belongs to the DNA mismatch repair MutL/HexB family.

This protein is involved in the repair of mismatches in DNA. It is required for dam-dependent methyl-directed DNA mismatch repair. May act as a 'molecular matchmaker', a protein that promotes the formation of a stable complex between two or more DNA-binding proteins in an ATP-dependent manner without itself being part of a final effector complex. This chain is DNA mismatch repair protein MutL, found in Methanoculleus marisnigri (strain ATCC 35101 / DSM 1498 / JR1).